Consider the following 1043-residue polypeptide: Desmoglein-1 (1043 aa).

The signal sequence occupies residues 1–23; sequence MNWPFFRAAVVLFIFLVVLEVNS. The propeptide occupies 24–49; that stretch reads DFRIQVRDYNTKNGTIKWHSLRRQKR. Cadherin domains follow at residues 50–158, 159–270, 271–385, and 386–498; these read EWIK…PVFS, MSTF…PYME, LPTQ…GSVF, and RPGS…VNGS. Topologically, residues 50 to 551 are extracellular; sequence EWIKFAAACR…PLRDNVHFGP (502 aa). Residues N110 and N180 are each glycosylated (N-linked (GlcNAc...) asparagine). Residue N496 is glycosylated (N-linked (GlcNAc...) asparagine). A helical membrane pass occupies residues 552–572; it reads AGIGLLIMGFLVLGLVPFLLM. At 573 to 1043 the chain is on the cytoplasmic side; it reads CCDCGGAPGG…TKYSTVQYTK (471 aa). The segment at 770–807 is disordered; the sequence is DVEPFPDSDPSWPPKSTEPVCPPQGTEPTGGGHPPISP. Desmoglein repeat repeat units follow at residues 819 to 845, 846 to 875, 876 to 905, 906 to 933, and 934 to 962; these read TYPSGPGVQHPTPIPDPLGYGNVTVTE, SYTSSGTLKPSVHIHDNRHASNVVVTERVV, GPISGADLQGMLEMPDLRDGSNVIVTERVI, APSSSLPTTLTIPDPRQSSNVVVTERVI, and QPTSGIVGNLSMHPELSNTHNVIVTERVV.

In terms of assembly, binds to JUP/plakoglobin. Interacts with PKP2. Interacts with DSC3; there is evidence to suggest that the interaction promotes cell-cell adhesion of keratinocytes. As to expression, expressed in the epidermis. Expressed in the muzzle epithelium.

It is found in the cell membrane. It localises to the cell junction. The protein resides in the desmosome. Its subcellular location is the cytoplasm. The protein localises to the nucleus. Its function is as follows. Component of intercellular desmosome junctions. Involved in the interaction of plaque proteins and intermediate filaments mediating cell-cell adhesion. In Bos taurus (Bovine), this protein is Desmoglein-1 (DSG1).